We begin with the raw amino-acid sequence, 713 residues long: Ribosomal RNA large subunit methyltransferase K/L (713 aa).

In terms of domain architecture, THUMP spans 43-154 (LAYRITLWTR…NGVITIAMNF (112 aa)).

It belongs to the methyltransferase superfamily. RlmKL family.

The protein resides in the cytoplasm. It catalyses the reaction guanosine(2445) in 23S rRNA + S-adenosyl-L-methionine = N(2)-methylguanosine(2445) in 23S rRNA + S-adenosyl-L-homocysteine + H(+). The enzyme catalyses guanosine(2069) in 23S rRNA + S-adenosyl-L-methionine = N(2)-methylguanosine(2069) in 23S rRNA + S-adenosyl-L-homocysteine + H(+). Specifically methylates the guanine in position 2445 (m2G2445) and the guanine in position 2069 (m7G2069) of 23S rRNA. The chain is Ribosomal RNA large subunit methyltransferase K/L from Shewanella sp. (strain MR-4).